We begin with the raw amino-acid sequence, 169 residues long: MTGITLVQGDITRQSADAIVNAANSSLLGGGGVDGAIHRRGGPAILAECRRLRAGHLGKGLPTGRAVATTAGDLDARWVIHTVGPVWSATEDRSGLLASCYRESLRTADELGARTVAFPAISTGVYRWPMDDAARIAVETVATTKTSVTEIRFVLFDARAYEAFAARLG.

A Macro domain is found at 1-169 (MTGITLVQGD…AYEAFAARLG (169 aa)).

This sequence belongs to the MacroD-type family.

In Streptomyces coelicolor (strain ATCC BAA-471 / A3(2) / M145), this protein is Macro domain-containing protein SCO6450.